Here is a 384-residue protein sequence, read N- to C-terminus: Protein V (384 aa).

Disordered stretches follow at residues Met-1–Glu-23 and Ser-38–Gly-317. Residues Ile-7–Gly-20 are compositionally biased toward basic and acidic residues. The segment covering Leu-50–Gly-59 has biased composition (polar residues). The residue at position 68 (Ser-68) is a Phosphoserine; by host. Positions Arg-83–Ala-101 are enriched in basic and acidic residues. Ser-125 is subject to Phosphoserine; by host. The span at Gly-150–Asp-168 shows a compositional bias: basic and acidic residues. The span at Ala-191–Ala-206 shows a compositional bias: polar residues. A phosphoserine; by host mark is found at Ser-192, Ser-249, Ser-257, and Ser-260. The Zn(2+) site is built by His-318, Cys-337, Cys-341, Cys-353, Cys-355, Cys-358, Cys-362, and Cys-365.

It belongs to the paramyxoviruses V protein family. In terms of assembly, interacts with host IFIH1/MDA5 and DHX58/LGP2. Interacts with host IRF3. Interacts with host RIGI regulatory protein (via CARDs domain) and host TRIM25 (via SPRY domain); these interactions prevent TRIM25-mediated ubiquitination of RIG-I and disrupts downstream RIG-I signaling.

It localises to the host cytoplasm. In terms of biological role, plays an essential role in the inhibition of host immune response. Prevents the establishment of cellular antiviral state by blocking interferon-alpha/beta (IFN-alpha/beta) production and signaling pathway. Interacts with host IFIH1/MDA5 and DHX58/LGP2 to inhibit the transduction pathway involved in the activation of IFN-beta promoter, thus protecting the virus against cell antiviral state. Also interacts with and inhibits host IRF3. Blocks the type I interferon signaling pathway by disrupting the RIG-I signaling pathway. The sequence is that of Protein V (P/V/C) from Sendai virus (strain Fushimi) (SeV).